The following is a 363-amino-acid chain: 1-aminocyclopropane-1-carboxylate oxidase homolog (363 aa).

One can recognise a Fe2OG dioxygenase domain in the interval 212–312 (FHLFCSCNYY…MSITCFFGES (101 aa)). The Fe cation site is built by histidine 236, aspartate 238, and histidine 292.

The protein belongs to the iron/ascorbate-dependent oxidoreductase family.

This Solanum lycopersicum (Tomato) protein is 1-aminocyclopropane-1-carboxylate oxidase homolog (ACO3).